A 302-amino-acid polypeptide reads, in one-letter code: Phosphoribosylaminoimidazole-succinocarboxamide synthase (302 aa).

This sequence belongs to the SAICAR synthetase family.

The enzyme catalyses 5-amino-1-(5-phospho-D-ribosyl)imidazole-4-carboxylate + L-aspartate + ATP = (2S)-2-[5-amino-1-(5-phospho-beta-D-ribosyl)imidazole-4-carboxamido]succinate + ADP + phosphate + 2 H(+). The protein operates within purine metabolism; IMP biosynthesis via de novo pathway; 5-amino-1-(5-phospho-D-ribosyl)imidazole-4-carboxamide from 5-amino-1-(5-phospho-D-ribosyl)imidazole-4-carboxylate: step 1/2. This Cupriavidus metallidurans (strain ATCC 43123 / DSM 2839 / NBRC 102507 / CH34) (Ralstonia metallidurans) protein is Phosphoribosylaminoimidazole-succinocarboxamide synthase.